Consider the following 50-residue polypeptide: Alpha-conotoxin CnIG (50 aa).

A signal peptide spans 1 to 7 (LTTTVVS). Positions 1–13 (LTTTVVSFPSDSA) are enriched in polar residues. The disordered stretch occupies residues 1–26 (LTTTVVSFPSDSASDGRDNEAKDERS). Positions 8–35 (FPSDSASDGRDNEAKDERSDMYELKRNG) are excised as a propeptide. A compositionally biased stretch (basic and acidic residues) spans 14–26 (SDGRDNEAKDERS). 2 disulfide bridges follow: C37/C42 and C38/C48. Residue C48 is modified to Cysteine amide.

It belongs to the conotoxin A superfamily. In terms of tissue distribution, expressed by the venom duct.

It localises to the secreted. The chain is Alpha-conotoxin CnIG from Conus consors (Singed cone).